The primary structure comprises 21 residues: Buforin-2 (21 aa).

Lysine 21 carries the N6-(2-hydroxyisobutyryl)lysine; alternate modification.

Belongs to the histone H2A family. Expressed by the skin glands.

It is found in the secreted. In terms of biological role, antimicrobial peptide with potent activity against some Gram-positive and Gram-negative bacteria. Does not permeabilize membrane, but internalizes into bacterial cells and alter specific gene expression involved in bacterial resistance mechanisms. Has the ability to agglutinate E.coli, and lipid vesicles. Shows a weak hemolytic activity, and is not cytotoxic to monocytes. The sequence is that of Buforin-2 from Sphaenorhynchus lacteus (Orinoco lime treefrog).